The following is a 92-amino-acid chain: Acyl carrier protein AcpXL (92 aa).

The Carrier domain maps to 2–88; it reads TATFDKVADI…NLCAKIDELK (87 aa). O-(pantetheine 4'-phosphoryl)serine is present on Ser-37.

Post-translationally, 4'-phosphopantetheine is transferred from CoA to a specific serine of apo-ACP by AcpS. This modification is essential for activity because fatty acids are bound in thioester linkage to the sulfhydryl of the prosthetic group.

It localises to the cytoplasm. Its pathway is glycolipid biosynthesis; KDO(2)-lipid A biosynthesis. Its function is as follows. Carrier of the growing fatty acid chain in fatty acid biosynthesis. Is involved in the transfer of long hydroxylated fatty acids to lipid A. Is acylated predominantly with 27-hydroxyoctacosanoic acid. This chain is Acyl carrier protein AcpXL (acpXL), found in Rhizobium etli (strain ATCC 51251 / DSM 11541 / JCM 21823 / NBRC 15573 / CFN 42).